The chain runs to 100 residues: Large ribosomal subunit protein uL23 (100 aa).

The protein belongs to the universal ribosomal protein uL23 family. As to quaternary structure, part of the 50S ribosomal subunit. Contacts protein L29, and trigger factor when it is bound to the ribosome.

Its function is as follows. One of the early assembly proteins it binds 23S rRNA. One of the proteins that surrounds the polypeptide exit tunnel on the outside of the ribosome. Forms the main docking site for trigger factor binding to the ribosome. The chain is Large ribosomal subunit protein uL23 from Mycolicibacterium gilvum (strain PYR-GCK) (Mycobacterium gilvum (strain PYR-GCK)).